Reading from the N-terminus, the 66-residue chain is Alpha-conotoxin GID (66 aa).

Positions 1–21 (MGMRMMFTVFLLVVLAATIVS) are cleaved as a signal peptide. A propeptide spanning residues 22-44 (FTSDRASDGRNVAAKAFHRIGRT) is cleaved from the precursor. Positions 45 to 48 (IRDE) are N-terminal tail important for activity on alpha-3-beta-2/CHRNA3-CHRNB2 and alpha-4-beta-2/CHRNA4-CHRNB2 nAChR. Position 48 is a 4-carboxyglutamate (E48). Intrachain disulfides connect C49/C55 and C50/C63. Positions 51-53 (SNP) are ser-Xaa-Pro motif, crucial for potent interaction with nAChR. Residue P60 is modified to 4-hydroxyproline.

It belongs to the conotoxin A superfamily. In terms of processing, gamma-carboxyglutamation of Glu-48 seems to be not important for nAChR inhibition, since synthetic peptides without this modification do not show change in inhibition of alpha-7/CHRNA7 and alpha-3-beta-2/CHRNA3-CHRNB2 nAChR and show a 2.3-fold increase in inhibition of alpha-4-beta-2/CHRNA4-CHRNB2 nAChR. Post-translationally, hydroxylation of Pro-60 seems to be important for nAChR inhibition, since synthetic peptides without this modification show a small decrease in inhibition of alpha-7/CHRNA7 and alpha-3-beta-2/CHRNA3-CHRNB2 nAChR and a very important decrease in inhibition of alpha-4-beta-2/CHRNA4-CHRNB2 nAChR. An amidation of Cys-63 increases potency against alpha-7/CHRNA7 (2.6-fold) and alpha-3-beta-2/CHRNA3-CHRNB2 (2-fold) nAChR. On the other hand, the peptide has no more activity on alpha-4-beta-2/CHRNA4-CHRNB2 nAChR with an amidated Cys-63. As to expression, expressed by the venom duct.

The protein resides in the secreted. Alpha-conotoxins act on postsynaptic membranes, they bind to the nicotinic acetylcholine receptors (nAChR) and thus inhibit them. This toxin reversibly blocks alpha-3-beta-2/CHRNA3-CHRNB2 (IC(50)=3.1-5.1 nM), alpha-7/CHRNA7 (IC(50)=4.5-5.1 nM), and alpha-4-beta-2/CHRNA4-CHRNB2 (IC(50)=128.6-390 nM) nAChRs. This is Alpha-conotoxin GID from Conus geographus (Geography cone).